The sequence spans 767 residues: Protein ROLLING AND ERECT LEAF 2 (767 aa).

3 disordered regions span residues 1–20 (MGCT…CKER), 78–187 (PALA…SEFF), and 201–309 (RELE…SSTV). 2 stretches are compositionally biased toward pro residues: residues 81-90 (APTPTPPPPS) and 110-126 (APPP…PPPV). Residues 145–155 (SDSSVASPARS) are compositionally biased toward low complexity. A compositionally biased stretch (basic and acidic residues) spans 201–210 (RELEEEEKAR). Positions 221 to 232 (EDEVDDDDDERE) are enriched in acidic residues. The segment covering 255-264 (TRSEEGEMGN) has biased composition (basic and acidic residues).

Highly expressed in young leaves and panicles. Expressed at low levels in roots.

It is found in the cell membrane. Involved in the regulation of leaf shape formation. May function by coordinating the expression of genes associated with leaf and bulliform cell development. The chain is Protein ROLLING AND ERECT LEAF 2 from Oryza sativa subsp. japonica (Rice).